Reading from the N-terminus, the 1443-residue chain is DNA polymerase III PolC-type (1443 aa).

One can recognise an Exonuclease domain in the interval 408 to 567 (FVIFDIETTG…YDTQALKKVF (160 aa)).

Belongs to the DNA polymerase type-C family. PolC subfamily.

It is found in the cytoplasm. It catalyses the reaction DNA(n) + a 2'-deoxyribonucleoside 5'-triphosphate = DNA(n+1) + diphosphate. In terms of biological role, required for replicative DNA synthesis. This DNA polymerase also exhibits 3' to 5' exonuclease activity. The protein is DNA polymerase III PolC-type of Mycoplasma pneumoniae (strain ATCC 29342 / M129 / Subtype 1) (Mycoplasmoides pneumoniae).